The chain runs to 473 residues: ATP synthase subunit beta (473 aa).

ATP is bound at residue 158-165; it reads GGAGVGKT.

It belongs to the ATPase alpha/beta chains family. In terms of assembly, F-type ATPases have 2 components, CF(1) - the catalytic core - and CF(0) - the membrane proton channel. CF(1) has five subunits: alpha(3), beta(3), gamma(1), delta(1), epsilon(1). CF(0) has three main subunits: a(1), b(2) and c(9-12). The alpha and beta chains form an alternating ring which encloses part of the gamma chain. CF(1) is attached to CF(0) by a central stalk formed by the gamma and epsilon chains, while a peripheral stalk is formed by the delta and b chains.

The protein localises to the cell membrane. The enzyme catalyses ATP + H2O + 4 H(+)(in) = ADP + phosphate + 5 H(+)(out). Its function is as follows. Produces ATP from ADP in the presence of a proton gradient across the membrane. The catalytic sites are hosted primarily by the beta subunits. The polypeptide is ATP synthase subunit beta (Anoxybacillus flavithermus (strain DSM 21510 / WK1)).